Consider the following 271-residue polypeptide: Acetyl-coenzyme A carboxylase carboxyl transferase subunit alpha (271 aa).

In terms of domain architecture, CoA carboxyltransferase C-terminal spans 1–247 (MSRELIRTVD…KKTILEALGE (247 aa)).

This sequence belongs to the AccA family. As to quaternary structure, acetyl-CoA carboxylase is a heterohexamer composed of biotin carboxyl carrier protein (AccB), biotin carboxylase (AccC) and two subunits each of ACCase subunit alpha (AccA) and ACCase subunit beta (AccD).

It localises to the cytoplasm. The enzyme catalyses N(6)-carboxybiotinyl-L-lysyl-[protein] + acetyl-CoA = N(6)-biotinyl-L-lysyl-[protein] + malonyl-CoA. It functions in the pathway lipid metabolism; malonyl-CoA biosynthesis; malonyl-CoA from acetyl-CoA: step 1/1. In terms of biological role, component of the acetyl coenzyme A carboxylase (ACC) complex. First, biotin carboxylase catalyzes the carboxylation of biotin on its carrier protein (BCCP) and then the CO(2) group is transferred by the carboxyltransferase to acetyl-CoA to form malonyl-CoA. This is Acetyl-coenzyme A carboxylase carboxyl transferase subunit alpha from Clostridium perfringens (strain SM101 / Type A).